Reading from the N-terminus, the 105-residue chain is MFAVIKAGGKQYKVDQNSVIKVEKIEGELGSKIQLNQVLMMGEYSKPSFIGTPLVKGAVVTAEITNQLRDNKIIVFKKKRRKNYRRKAGHRQELTELKILDITKQ.

The protein belongs to the bacterial ribosomal protein bL21 family. In terms of assembly, part of the 50S ribosomal subunit. Contacts protein L20.

Its function is as follows. This protein binds to 23S rRNA in the presence of protein L20. This Rickettsia bellii (strain OSU 85-389) protein is Large ribosomal subunit protein bL21.